A 682-amino-acid chain; its full sequence is Glutamine--fructose-6-phosphate aminotransferase [isomerizing] 2 (682 aa).

C2 acts as the For GATase activity in catalysis. In terms of domain architecture, Glutamine amidotransferase type-2 spans 2-288 (CGIFAYMNYR…DDDIAAVADG (287 aa)). A Phosphoserine modification is found at S244. SIS domains are found at residues 360–499 (HLKE…DRIS) and 531–672 (LALE…VDFP). Residues 377-378 (TS), 422-424 (SQS), T427, and H578 contribute to the substrate site.

Highest levels of expression in heart, placenta, and spinal cord.

The enzyme catalyses D-fructose 6-phosphate + L-glutamine = D-glucosamine 6-phosphate + L-glutamate. Its pathway is nucleotide-sugar biosynthesis; UDP-N-acetyl-alpha-D-glucosamine biosynthesis; alpha-D-glucosamine 6-phosphate from D-fructose 6-phosphate: step 1/1. Its function is as follows. Controls the flux of glucose into the hexosamine pathway. Most likely involved in regulating the availability of precursors for N- and O-linked glycosylation of proteins. In Homo sapiens (Human), this protein is Glutamine--fructose-6-phosphate aminotransferase [isomerizing] 2 (GFPT2).